Reading from the N-terminus, the 464-residue chain is tRNA-2-methylthio-N(6)-dimethylallyladenosine synthase (464 aa).

The 118-residue stretch at 5–122 (RKLYVKSFGC…LPEMLARVRD (118 aa)) folds into the MTTase N-terminal domain. The [4Fe-4S] cluster site is built by Cys-14, Cys-50, Cys-85, Cys-163, Cys-167, and Cys-170. A Radical SAM core domain is found at 149–383 (KKRGPTAFVT…VLEASKTAFD (235 aa)). A TRAM domain is found at 384–446 (RACMGRRFDI…PNSLAGQVVD (63 aa)).

The protein belongs to the methylthiotransferase family. MiaB subfamily. As to quaternary structure, monomer. The cofactor is [4Fe-4S] cluster.

The protein localises to the cytoplasm. The enzyme catalyses N(6)-dimethylallyladenosine(37) in tRNA + (sulfur carrier)-SH + AH2 + 2 S-adenosyl-L-methionine = 2-methylsulfanyl-N(6)-dimethylallyladenosine(37) in tRNA + (sulfur carrier)-H + 5'-deoxyadenosine + L-methionine + A + S-adenosyl-L-homocysteine + 2 H(+). Catalyzes the methylthiolation of N6-(dimethylallyl)adenosine (i(6)A), leading to the formation of 2-methylthio-N6-(dimethylallyl)adenosine (ms(2)i(6)A) at position 37 in tRNAs that read codons beginning with uridine. The chain is tRNA-2-methylthio-N(6)-dimethylallyladenosine synthase from Azorhizobium caulinodans (strain ATCC 43989 / DSM 5975 / JCM 20966 / LMG 6465 / NBRC 14845 / NCIMB 13405 / ORS 571).